A 416-amino-acid chain; its full sequence is MKLSELAPRERHNFIYFMLFFFFYYFIMSAYFPFFPVWLAEVNHLTKTETGIVFSCISLFAIIFQPVFGLISDKLGLRKHLLWTITILLILFAPFFIFVFSPLLQMNIMAGALVGGVYLGIVFSSRSGAVEAYIERVSRANRFEYGKVRVSGCVGWALCASITGILFSIDPNITFWIASGFALILGVLLWVSKPESSNSAEVIDALGANRQAFSMRTAAELFRMPRFWGFIIYVVGVASVYDVFDQQFANFFKGFFSSPQRGTEVFGFVTTGGELLNALIMFCAPAIINRIGAKNALLIAGLIMSVRILGSSFATSAVEVIILKMLHMFEIPFLLVGTFKYISSAFKGKLSATLFLIGFNLSKQLSSVVLSAWVGRMYDTVGFHQAYLILGCITLSFTVISLFTLKGSKTLLPATA.

The Cytoplasmic portion of the chain corresponds to 1 to 13; it reads MKLSELAPRERHN. Residues 14–34 form a helical membrane-spanning segment; sequence FIYFMLFFFFYYFIMSAYFPF. The Periplasmic portion of the chain corresponds to 35–50; the sequence is FPVWLAEVNHLTKTET. Residues 51–71 form a helical membrane-spanning segment; that stretch reads GIVFSCISLFAIIFQPVFGLI. Over 72-80 the chain is Cytoplasmic; the sequence is SDKLGLRKH. The chain crosses the membrane as a helical span at residues 81-101; sequence LLWTITILLILFAPFFIFVFS. Residue Pro-102 is a topological domain, periplasmic. A helical membrane pass occupies residues 103 to 123; the sequence is LLQMNIMAGALVGGVYLGIVF. Over 124-149 the chain is Cytoplasmic; it reads SSRSGAVEAYIERVSRANRFEYGKVR. Transmembrane regions (helical) follow at residues 150-170 and 171-191; these read VSGC…FSID and PNIT…LLWV. The Cytoplasmic portion of the chain corresponds to 192–223; that stretch reads SKPESSNSAEVIDALGANRQAFSMRTAAELFR. Residues 224–244 form a helical membrane-spanning segment; sequence MPRFWGFIIYVVGVASVYDVF. The Periplasmic portion of the chain corresponds to 245–267; the sequence is DQQFANFFKGFFSSPQRGTEVFG. Residues 268 to 288 form a helical membrane-spanning segment; sequence FVTTGGELLNALIMFCAPAII. Residues 289–295 lie on the Cytoplasmic side of the membrane; sequence NRIGAKN. A run of 2 helical transmembrane segments spans residues 296-316 and 317-337; these read ALLI…FATS and AVEV…LLVG. The Cytoplasmic segment spans residues 338–353; that stretch reads TFKYISSAFKGKLSAT. The helical transmembrane segment at 354–374 threads the bilayer; the sequence is LFLIGFNLSKQLSSVVLSAWV. The Periplasmic segment spans residues 375-384; that stretch reads GRMYDTVGFH. The chain crosses the membrane as a helical span at residues 385–405; it reads QAYLILGCITLSFTVISLFTL. Residues 406–416 are Cytoplasmic-facing; that stretch reads KGSKTLLPATA.

This sequence belongs to the major facilitator superfamily. Oligosaccharide:H(+) symporter (OHS) (TC 2.A.1.5) family.

The protein localises to the cell inner membrane. It catalyses the reaction lactose(in) + H(+)(in) = lactose(out) + H(+)(out). In terms of biological role, responsible for transport of beta-galactosides into the cell, with the concomitant import of a proton (symport system). The chain is Lactose permease (lacY) from Klebsiella oxytoca.